The chain runs to 253 residues: E3 ubiquitin-protein ligase MARCHF3 (253 aa).

The RING-CH-type zinc finger occupies 63–123 (SPFNDRPMCR…ELCHFRFAVE (61 aa)). 8 residues coordinate Zn(2+): cysteine 71, cysteine 74, cysteine 87, cysteine 89, histidine 97, cysteine 100, cysteine 113, and cysteine 116. 2 helical membrane passes run 145–165 (LFGDMVCFLFITPLATISGWL) and 182–202 (AVGLIALTVALFTIYLFWTLV). Phosphoserine is present on residues serine 237 and serine 243.

Interacts with MARCHF2 and STX6.

It is found in the cytoplasmic vesicle membrane. The protein localises to the early endosome membrane. It carries out the reaction S-ubiquitinyl-[E2 ubiquitin-conjugating enzyme]-L-cysteine + [acceptor protein]-L-lysine = [E2 ubiquitin-conjugating enzyme]-L-cysteine + N(6)-ubiquitinyl-[acceptor protein]-L-lysine.. It functions in the pathway protein modification; protein ubiquitination. Its function is as follows. E3 ubiquitin-protein ligase which may be involved in endosomal trafficking. E3 ubiquitin ligases accept ubiquitin from an E2 ubiquitin-conjugating enzyme in the form of a thioester and then directly transfer the ubiquitin to targeted substrates. This is E3 ubiquitin-protein ligase MARCHF3 (MARCHF3) from Bos taurus (Bovine).